The sequence spans 124 residues: Probable dihydroneopterin aldolase (124 aa).

Residues Glu-23, Tyr-56, and 75–76 (IE) each bind substrate. The active-site Proton donor/acceptor is Lys-103.

Belongs to the DHNA family.

It catalyses the reaction 7,8-dihydroneopterin = 6-hydroxymethyl-7,8-dihydropterin + glycolaldehyde. It functions in the pathway cofactor biosynthesis; tetrahydrofolate biosynthesis; 2-amino-4-hydroxy-6-hydroxymethyl-7,8-dihydropteridine diphosphate from 7,8-dihydroneopterin triphosphate: step 3/4. In terms of biological role, catalyzes the conversion of 7,8-dihydroneopterin to 6-hydroxymethyl-7,8-dihydropterin. In Chlamydia trachomatis serovar D (strain ATCC VR-885 / DSM 19411 / UW-3/Cx), this protein is Probable dihydroneopterin aldolase (folB).